Consider the following 763-residue polypeptide: Cadherin-like protein 26 (763 aa).

A signal peptide spans 1 to 20 (MDTRGCAWLLLLLSLPQGQS). Cadherin domains lie at 21–140 (HQPL…APQF), 141–250 (PEKE…MPTF), 251–371 (MEDR…PPAF), and 370–478 (AFHP…APTL). Residues 21–590 (HQPLHRSKRR…SECEEPSDTW (570 aa)) are Extracellular-facing. N-linked (GlcNAc...) asparagine glycosylation is found at Asn56, Asn60, and Asn146. N-linked (GlcNAc...) asparagine glycosylation is found at Asn394 and Asn440. The helical transmembrane segment at 591–611 (LLWWALSPVGAALMVLSAALL) threads the bilayer. At 612–763 (CLLRCSCTFG…AMCFTSRVPS (152 aa)) the chain is on the cytoplasmic side.

In terms of assembly, homodimer. Component of a cadherin:catenin adhesion complex composed of at least of CDH26, beta-catenin/CTNNB1, alpha-catenin/CTNNA1 and p120 catenin/CTNND1. Post-translationally, N-glycosylated.

It localises to the cell membrane. Cadherins are calcium-dependent cell adhesion proteins. They preferentially interact with themselves in a homophilic manner in connecting cells; cadherins may thus contribute to the sorting of heterogeneous cell types. Ligand for integrins alpha-E/beta-7, ITGAE:ITGAB7, alpha-4/beta-7, ITGA4:ITGAB7 and alpha-4/beta-1, ITGA4:ITGAB1 through which modulates CD4(+) T cells activation. In Mus musculus (Mouse), this protein is Cadherin-like protein 26 (Cdh26).